The chain runs to 392 residues: Ameloblastin (392 aa).

The signal sequence occupies residues 1 to 26; it reads MPALKIPLFKMKDMILILCLLKMSSA. Residue P37 is modified to Hydroxyproline. Position 43 is a phosphoserine (S43). 3 disordered regions span residues 86-109, 247-280, and 349-392; these read FPWMRPREHETQQPSLQPQQPGQK, TLEFDSPVAATKGPEKGEGGAQDSPVPEAHLADP, and TTLG…FQEP. Low complexity predominate over residues 97 to 109; the sequence is QQPSLQPQQPGQK. The span at 359 to 381 shows a compositional bias: polar residues; that stretch reads VDSTATPDTQHTLMPRNKAQQPQ. Basic and acidic residues predominate over residues 382-392; it reads IKHDAWHFQEP.

Belongs to the ameloblastin family.

The protein localises to the secreted. It is found in the extracellular space. The protein resides in the extracellular matrix. Involved in the mineralization and structural organization of enamel. In Bos taurus (Bovine), this protein is Ameloblastin (AMBN).